A 317-amino-acid chain; its full sequence is Dehydrogenase/reductase SDR family member 12 (317 aa).

NAD(+) is bound by residues S50 and I52. S175 is a binding site for substrate. Residues Y201, K205, and T234 each coordinate NAD(+). Y201 serves as the catalytic Proton acceptor.

This sequence belongs to the short-chain dehydrogenases/reductases (SDR) family.

Putative oxidoreductase. The chain is Dehydrogenase/reductase SDR family member 12 from Homo sapiens (Human).